Reading from the N-terminus, the 510-residue chain is Probable inorganic carbon transporter subunit DabB (510 aa).

The next 14 helical transmembrane spans lie at 9–29 (TLLT…LLFL), 37–57 (FVHI…LALV), 68–88 (WHLD…GLII), 105–122 (YFAL…AWLS), 125–145 (LRFM…LIGL), 158–178 (ISGY…IWLF), 204–224 (TGIN…WPFQ), 226–246 (WLIE…AGLV), 266–286 (QIIL…ISLV), 303–323 (GFML…HLIL), 355–375 (LWMI…WFIT), 382–402 (LVSA…LVVF), 410–430 (IAGL…HNSL), and 446–466 (APAV…CTFV).

It belongs to the inorganic carbon transporter (TC 9.A.2) DabB family. Forms a complex with DabA.

Its subcellular location is the cell membrane. Part of an energy-coupled inorganic carbon pump. Expression of both dabA and dabB (DA2) restores growth in ambient air to E.coli deleted of its carbonic anhydrase genes (called CAfree, deletion of 'can' and 'cynT'). The protein is Probable inorganic carbon transporter subunit DabB of Bacillus anthracis.